Here is a 348-residue protein sequence, read N- to C-terminus: GMP reductase 2 (348 aa).

NADP(+) contacts are provided by residues 26–27, Lys78, 129–131, and 180–181; these read SR, DVA, and IG. Positions 181, 183, and 186 each coordinate K(+). Cys186 functions as the Thioimidate intermediate in the catalytic mechanism. Catalysis depends on Thr188, which acts as the Proton donor/acceptor. Arg189 is a K(+) binding site. Residues 219–221, 242–243, 268–270, and 286–290 each bind GMP; these read DGG, GG, GMS, and RASEG. NADP(+) contacts are provided by residues Met269 and 285–286; that span reads YR. Lys291 is subject to N6-acetyllysine. Residue 314–317 coordinates NADP(+); it reads STCT.

It belongs to the IMPDH/GMPR family. GuaC type 1 subfamily. In terms of assembly, homotetramer.

The catalysed reaction is IMP + NH4(+) + NADP(+) = GMP + NADPH + 2 H(+). Functionally, catalyzes the irreversible NADPH-dependent deamination of GMP to IMP. It functions in the conversion of nucleobase, nucleoside and nucleotide derivatives of G to A nucleotides, and in maintaining the intracellular balance of A and G nucleotides. Plays a role in modulating cellular differentiation. This chain is GMP reductase 2, found in Mus musculus (Mouse).